A 325-amino-acid chain; its full sequence is Tagatose 1,6-diphosphate aldolase (325 aa).

The protein belongs to the aldolase LacD family.

The catalysed reaction is D-tagatofuranose 1,6-bisphosphate = D-glyceraldehyde 3-phosphate + dihydroxyacetone phosphate. The protein operates within carbohydrate metabolism; D-tagatose 6-phosphate degradation; D-glyceraldehyde 3-phosphate and glycerone phosphate from D-tagatose 6-phosphate: step 2/2. In Staphylococcus epidermidis (strain ATCC 12228 / FDA PCI 1200), this protein is Tagatose 1,6-diphosphate aldolase.